Consider the following 353-residue polypeptide: C-X-C chemokine receptor type 2 (353 aa).

Topologically, residues 1-45 are extracellular; sequence FNMESDSFEDLWKGEDFSNYSYSSDLPPSLPDVAPCRPESLEINK. N-linked (GlcNAc...) asparagine glycosylation is present at Asn-19. The chain crosses the membrane as a helical span at residues 46 to 72; it reads YFVVIIYALVFLLSLLGNSLVMLVILY. The Cytoplasmic segment spans residues 73 to 81; the sequence is SRVGRSVTD. A helical membrane pass occupies residues 82 to 102; the sequence is VYLLNLALADLLFALTLPIWA. The Extracellular portion of the chain corresponds to 103–117; the sequence is ASKVNGWIFGTFLCK. Cys-116 and Cys-193 form a disulfide bridge. Residues 118-139 form a helical membrane-spanning segment; sequence VVSLLKEVNFYSGILLLACISV. At 140 to 160 the chain is on the cytoplasmic side; the sequence is DRYLAIVHATRTLTQKRYLVK. The chain crosses the membrane as a helical span at residues 161-180; it reads FICLSIWGLSLLLALPVLLF. At 181–205 the chain is on the extracellular side; sequence RRTVYSSNVSPACYEDMGNNTANWR. Residues 206 to 228 traverse the membrane as a helical segment; sequence MLLRILPQSFGFIVPLLIMLFCY. Over 229 to 248 the chain is Cytoplasmic; that stretch reads GFTLRTLFKAHMGQKHRAMR. A helical transmembrane segment spans residues 249–270; it reads VIFAVVLIFLLCWLPYSLVLLA. Over 271-291 the chain is Extracellular; sequence DTLMRTQVIQETCERRNHIDR. A helical membrane pass occupies residues 292 to 312; that stretch reads ALDATEILGILHSCLNPLIYA. At 313-353 the chain is on the cytoplasmic side; sequence FIGQKFRHGLLKILAIHGLISKDSLPKDSRPSFVGSSSGHT.

It belongs to the G-protein coupled receptor 1 family. Interacts with IL8. Interacts with GNAI2. Phosphorylated upon ligand binding; which is required for desensitization.

The protein localises to the cell membrane. Its function is as follows. Receptor for interleukin-8 which is a powerful neutrophil chemotactic factor. Binding of IL-8 to the receptor causes activation of neutrophils. This response is mediated via a G-protein that activates a phosphatidylinositol-calcium second messenger system. Binds to IL-8 with high affinity. Also binds with high affinity to CXCL3, GRO/MGSA and NAP-2. This Macaca mulatta (Rhesus macaque) protein is C-X-C chemokine receptor type 2 (CXCR2).